The sequence spans 245 residues: 1-(5-phosphoribosyl)-5-[(5-phosphoribosylamino)methylideneamino] imidazole-4-carboxamide isomerase (245 aa).

Catalysis depends on aspartate 7, which acts as the Proton acceptor. Catalysis depends on aspartate 129, which acts as the Proton donor.

Belongs to the HisA/HisF family.

The protein localises to the cytoplasm. The enzyme catalyses 1-(5-phospho-beta-D-ribosyl)-5-[(5-phospho-beta-D-ribosylamino)methylideneamino]imidazole-4-carboxamide = 5-[(5-phospho-1-deoxy-D-ribulos-1-ylimino)methylamino]-1-(5-phospho-beta-D-ribosyl)imidazole-4-carboxamide. It functions in the pathway amino-acid biosynthesis; L-histidine biosynthesis; L-histidine from 5-phospho-alpha-D-ribose 1-diphosphate: step 4/9. The polypeptide is 1-(5-phosphoribosyl)-5-[(5-phosphoribosylamino)methylideneamino] imidazole-4-carboxamide isomerase (Proteus mirabilis (strain HI4320)).